Here is a 423-residue protein sequence, read N- to C-terminus: Imidazolonepropionase (423 aa).

Residues His-78 and His-80 each contribute to the Fe(3+) site. Residues His-78 and His-80 each coordinate Zn(2+). Residues Arg-87, Tyr-150, and His-183 each contribute to the 4-imidazolone-5-propanoate site. Tyr-150 contributes to the N-formimidoyl-L-glutamate binding site. His-247 provides a ligand contact to Fe(3+). Residue His-247 participates in Zn(2+) binding. Residue Glu-250 coordinates 4-imidazolone-5-propanoate. Asp-322 lines the Fe(3+) pocket. Asp-322 contributes to the Zn(2+) binding site. Positions 324 and 326 each coordinate N-formimidoyl-L-glutamate. Position 327 (Ser-327) interacts with 4-imidazolone-5-propanoate.

It belongs to the metallo-dependent hydrolases superfamily. HutI family. Zn(2+) serves as cofactor. The cofactor is Fe(3+).

Its subcellular location is the cytoplasm. The enzyme catalyses 4-imidazolone-5-propanoate + H2O = N-formimidoyl-L-glutamate. Its pathway is amino-acid degradation; L-histidine degradation into L-glutamate; N-formimidoyl-L-glutamate from L-histidine: step 3/3. Its function is as follows. Catalyzes the hydrolytic cleavage of the carbon-nitrogen bond in imidazolone-5-propanoate to yield N-formimidoyl-L-glutamate. It is the third step in the universal histidine degradation pathway. This chain is Imidazolonepropionase, found in Bacillus cereus (strain G9842).